Here is a 376-residue protein sequence, read N- to C-terminus: UPF0754 membrane protein SERP1382 (376 aa).

2 consecutive transmembrane segments (helical) span residues 4–24 (ILLVVFMIILGAIIGGVTNMI) and 356–376 (TLGFILGGIIGFFQGVIAIFV).

The protein belongs to the UPF0754 family.

It is found in the cell membrane. This chain is UPF0754 membrane protein SERP1382, found in Staphylococcus epidermidis (strain ATCC 35984 / DSM 28319 / BCRC 17069 / CCUG 31568 / BM 3577 / RP62A).